The following is a 169-amino-acid chain: UPF0251 protein MM_2090 (169 aa).

It belongs to the UPF0251 family.

The sequence is that of UPF0251 protein MM_2090 from Methanosarcina mazei (strain ATCC BAA-159 / DSM 3647 / Goe1 / Go1 / JCM 11833 / OCM 88) (Methanosarcina frisia).